A 359-amino-acid chain; its full sequence is Src kinase-associated phosphoprotein 2 (359 aa).

Phosphoserine occurs at positions 5, 6, and 9. The tract at residues 67-88 (GDAEDGEEYDDPFAGPPDTISL) is disordered. Y75 bears the Phosphotyrosine mark. Phosphoserine occurs at positions 87 and 90. The PH domain maps to 116–219 (FVLKAGYLEK…WVQQLKFVLQ (104 aa)). Phosphotyrosine is present on residues Y151 and Y197. S223 is subject to Phosphoserine. Y261 bears the Phosphotyrosine mark. A Phosphoserine modification is found at S286. One can recognise an SH3 domain in the interval 297–358 (DYANFYQGLW…PKAYIMEMYD (62 aa)).

It belongs to the SKAP family. As to quaternary structure, interacts with FYB1, which is required for SKAP2 protein stability. Interacts with PTPNS1. Part of a complex consisting of SKAP2, FYB1 and PTPNS1. Part of a complex consisting of SKAP2, FYB1 and LILRB3. Interacts with LAT, GRB2, PTK2B, and PRAM1. May interact with actin. May interact with FYN, HCK and LYN. Interacts with FASLG.

Its subcellular location is the cytoplasm. Its function is as follows. May be involved in B-cell and macrophage adhesion processes. In B-cells, may act by coupling the B-cell receptor (BCR) to integrin activation. May play a role in src signaling pathway. The chain is Src kinase-associated phosphoprotein 2 (SKAP2) from Pongo abelii (Sumatran orangutan).